Consider the following 311-residue polypeptide: Malate dehydrogenase (311 aa).

Residues glycine 7–glycine 13 and aspartate 34 each bind NAD(+). Residues arginine 81 and arginine 87 each contribute to the substrate site. Residues asparagine 94 and isoleucine 117–asparagine 119 each bind NAD(+). Asparagine 119 and arginine 153 together coordinate substrate. Residue histidine 177 is the Proton acceptor of the active site. Methionine 227 is a binding site for NAD(+).

It belongs to the LDH/MDH superfamily. MDH type 1 family. As to quaternary structure, homodimer.

The enzyme catalyses (S)-malate + NAD(+) = oxaloacetate + NADH + H(+). Functionally, catalyzes the reversible oxidation of malate to oxaloacetate. The sequence is that of Malate dehydrogenase from Shewanella halifaxensis (strain HAW-EB4).